A 426-amino-acid chain; its full sequence is Serine--tRNA ligase (426 aa).

An L-serine-binding site is contributed by 227–229; the sequence is TSE. Residues 258–260 and Val-274 contribute to the ATP site; that span reads RKE. Glu-281 serves as a coordination point for L-serine. 345–348 lines the ATP pocket; the sequence is ELTS. Residue Thr-380 coordinates L-serine.

The protein belongs to the class-II aminoacyl-tRNA synthetase family. Type-1 seryl-tRNA synthetase subfamily. In terms of assembly, homodimer. The tRNA molecule binds across the dimer.

It localises to the cytoplasm. The catalysed reaction is tRNA(Ser) + L-serine + ATP = L-seryl-tRNA(Ser) + AMP + diphosphate + H(+). It carries out the reaction tRNA(Sec) + L-serine + ATP = L-seryl-tRNA(Sec) + AMP + diphosphate + H(+). It functions in the pathway aminoacyl-tRNA biosynthesis; selenocysteinyl-tRNA(Sec) biosynthesis; L-seryl-tRNA(Sec) from L-serine and tRNA(Sec): step 1/1. In terms of biological role, catalyzes the attachment of serine to tRNA(Ser). Is also able to aminoacylate tRNA(Sec) with serine, to form the misacylated tRNA L-seryl-tRNA(Sec), which will be further converted into selenocysteinyl-tRNA(Sec). The polypeptide is Serine--tRNA ligase (Clavibacter sepedonicus (Clavibacter michiganensis subsp. sepedonicus)).